Here is a 407-residue protein sequence, read N- to C-terminus: Phosphopentomutase (407 aa).

Mn(2+) is bound by residues aspartate 10, aspartate 306, histidine 311, aspartate 347, histidine 348, and histidine 359.

The protein belongs to the phosphopentomutase family. The cofactor is Mn(2+).

Its subcellular location is the cytoplasm. The catalysed reaction is 2-deoxy-alpha-D-ribose 1-phosphate = 2-deoxy-D-ribose 5-phosphate. It catalyses the reaction alpha-D-ribose 1-phosphate = D-ribose 5-phosphate. It participates in carbohydrate degradation; 2-deoxy-D-ribose 1-phosphate degradation; D-glyceraldehyde 3-phosphate and acetaldehyde from 2-deoxy-alpha-D-ribose 1-phosphate: step 1/2. Functionally, isomerase that catalyzes the conversion of deoxy-ribose 1-phosphate (dRib-1-P) and ribose 1-phosphate (Rib-1-P) to deoxy-ribose 5-phosphate (dRib-5-P) and ribose 5-phosphate (Rib-5-P), respectively. This Salmonella paratyphi C (strain RKS4594) protein is Phosphopentomutase.